The primary structure comprises 379 residues: Odorant receptor 23a (379 aa).

Topologically, residues 1 to 36 are cytoplasmic; it reads MKLSETLKIDYFRVQLNAWRICGALDLSEGRYWSWS. Residues 37–57 traverse the membrane as a helical segment; that stretch reads MLLCILVYLPTPMLLRGVYSF. The Extracellular segment spans residues 58-64; sequence EDPVENN. An N-linked (GlcNAc...) asparagine glycan is attached at asparagine 64. The chain crosses the membrane as a helical span at residues 65–85; sequence FSLSLTVTSLSNLMKFCMYVA. Residues 86–125 lie on the Cytoplasmic side of the membrane; that stretch reads QLTKMVEVQSLIGQLDARVSGESQSERHRNMTEHLLRMSK. The chain crosses the membrane as a helical span at residues 126–146; it reads LFQITYAVVFIIAAVPFVFET. Topologically, residues 147–162 are extracellular; it reads ELSLPMPMWFPFDWKN. A helical transmembrane segment spans residues 163–183; it reads SMVAYIGALVFQEIGYVFQIM. Topologically, residues 184 to 253 are cytoplasmic; the sequence is QCFAADSFPP…TKSLVSYPMM (70 aa). A helical transmembrane segment spans residues 254-274; that stretch reads VQFMVIGINIAITLFVLIFYV. Over 275-280 the chain is Extracellular; it reads ETLYDR. The chain crosses the membrane as a helical span at residues 281 to 301; the sequence is IYYLCFLLGITVQTYPLCYYG. The Cytoplasmic portion of the chain corresponds to 302–340; that stretch reads TMVQESFAELHYAVFCSNWVDQSASYRGHMLILAERTKR. Residues 341 to 361 traverse the membrane as a helical segment; sequence MQLLLAGNLVPIHLSTYVACW. At 362–379 the chain is on the extracellular side; that stretch reads KGAYSFFTLMADRDGLGS.

It belongs to the insect chemoreceptor superfamily. Heteromeric odorant receptor channel (TC 1.A.69) family. Or2a subfamily. In terms of assembly, interacts with Orco. Complexes exist early in the endomembrane system in olfactory sensory neurons (OSNs), coupling these complexes to the conserved ciliary trafficking pathway. In terms of tissue distribution, expressed in 10-40 sensory cells in the third antenna segment and in the maxillary palp.

The protein localises to the cell membrane. In terms of biological role, odorant receptor which mediates acceptance or avoidance behavior, depending on its substrates. The odorant receptor repertoire encodes a large collection of odor stimuli that vary widely in identity, intensity, and duration. May form a complex with Orco to form odorant-sensing units, providing sensitive and prolonged odorant signaling and calcium permeability. The protein is Odorant receptor 23a (Or23a) of Drosophila melanogaster (Fruit fly).